The sequence spans 282 residues: tRNA pseudouridine synthase B (282 aa).

The Nucleophile role is filled by Asp-39.

This sequence belongs to the pseudouridine synthase TruB family. Type 1 subfamily.

It catalyses the reaction uridine(55) in tRNA = pseudouridine(55) in tRNA. Responsible for synthesis of pseudouridine from uracil-55 in the psi GC loop of transfer RNAs. The chain is tRNA pseudouridine synthase B from Borrelia garinii subsp. bavariensis (strain ATCC BAA-2496 / DSM 23469 / PBi) (Borreliella bavariensis).